The following is a 1256-amino-acid chain: Centrosome and spindle pole-associated protein 1 (1256 aa).

Coiled coils occupy residues 38–62 and 114–135; these read ADNLDEFIEEQKARLAEDKAELESD and EDYERKKHKLKEELRQDYRRYL. A compositionally biased stretch (basic and acidic residues) spans 189–208; sequence GKEESSEKFRQVEKSTEPKS. Disordered regions lie at residues 189 to 244 and 381 to 403; these read GKEE…LTPS and AENKSAPDNETSKSANQDTCSPF. A compositionally biased stretch (polar residues) spans 222–232; it reads LTSQIQTSCEN. Residue serine 244 is modified to Phosphoserine. Positions 244 to 270 form a coiled coil; that stretch reads SEAYEELLNQRRLEEDRYRQLDDEIEL. Residues 417-449 are a coiled coil; that stretch reads QRRKEKYRLELLEQMAEQQRNKRREKDLELRVA. 2 positions are modified to phosphoserine: serine 459 and serine 527. Residues 625–669 are a coiled coil; sequence SKQSLQSYQEALQQQIREREERRKKEREEKEEYEAKLEAEMRTYN. Disordered regions lie at residues 735 to 757 and 813 to 853; these read ANKSSGHMQTQSSPFARGNVFGE and EYEE…KKEE. Polar residues predominate over residues 736–748; that stretch reads NKSSGHMQTQSSP. A phosphoserine mark is found at serine 901 and serine 920. Residues 913 to 932 form a disordered region; it reads SSMSRAQSPPVPARKNQLRA. A coiled-coil region spans residues 925–964; that stretch reads ARKNQLRAEEEKKNVIMELSEMRKQLRSEERRLQERLLHM. Serine 966 is subject to Phosphoserine. 2 disordered regions span residues 1114 to 1147 and 1232 to 1256; these read EDDVLPPPSQLPSARERRRNKWKGLDIDSSRPNV and LNQEQQQIPGKPGTFTWQGLSTAHG. Polar residues predominate over residues 1246-1256; the sequence is FTWQGLSTAHG.

As to quaternary structure, interacts with PLEKHG6. Interacts with ARMC9, TOGARAM1, CCDC66, CEP104 and CEP290. Phosphorylated. Phosphorylation increases in colcemide-treated cells. As to expression, expressed in adult and fetal brain with enrichment in the cerebellum. Detected in testis.

The protein localises to the cytoplasm. It is found in the cytoskeleton. The protein resides in the microtubule organizing center. It localises to the centrosome. Its subcellular location is the spindle. The protein localises to the spindle pole. It is found in the cell projection. The protein resides in the cilium. May play a role in cell-cycle-dependent microtubule organization. This chain is Centrosome and spindle pole-associated protein 1 (CSPP1), found in Homo sapiens (Human).